The chain runs to 541 residues: Membrane protein insertase YidC (541 aa).

Transmembrane regions (helical) follow at residues 7 to 27 (LFLV…QTDH), 340 to 360 (QLIH…TFIV), 415 to 435 (LGGC…YYML), 453 to 473 (LAAP…MFFI), and 494 to 514 (PVIF…YYIV).

The protein belongs to the OXA1/ALB3/YidC family. Type 1 subfamily. As to quaternary structure, interacts with the Sec translocase complex via SecD. Specifically interacts with transmembrane segments of nascent integral membrane proteins during membrane integration.

It is found in the cell inner membrane. Required for the insertion and/or proper folding and/or complex formation of integral membrane proteins into the membrane. Involved in integration of membrane proteins that insert both dependently and independently of the Sec translocase complex, as well as at least some lipoproteins. Aids folding of multispanning membrane proteins. The polypeptide is Membrane protein insertase YidC (Edwardsiella ictaluri (strain 93-146)).